A 359-amino-acid chain; its full sequence is MAPMGIRLSPLGVAVFCLLGLGVLYHLYSGFLAGRFSLFGLGGEPGGGAAGPAAAADGGTVDLREMLAVSVLAAVRGGDEVRRVRESNVLHEKSKGKTREGAEDKMTSGDVLSNRKMFYLLKTAFPSVQINTEEHVDAADQEVILWDHKIPEDILKEVTTPKEVPAESVTVWIDPLDATQEYTEDLRKYVTTMVCVAVNGKPMLGVIHKPFSEYTAWAMVDGGSNVKARSSYNEKTPRIVVSRSHSGMVKQVALQTFGNQTTIIPAGGAGYKVLALLDVPDKSQEKADLYIHVTYIKKWDICAGNAILKALGGHMTTLSGEEISYTGSDGIEGGLLASIRMNHQALVRKLPDLEKTGHK.

An N-acetylmethionine modification is found at methionine 1. Residues 1–12 (MAPMGIRLSPLG) lie on the Cytoplasmic side of the membrane. The helical transmembrane segment at 13–33 (VAVFCLLGLGVLYHLYSGFLA) threads the bilayer. Residues 34–359 (GRFSLFGLGG…LPDLEKTGHK (326 aa)) lie on the Lumenal side of the membrane. Residues 86 to 106 (ESNVLHEKSKGKTREGAEDKM) form a disordered region. Catalysis depends on aspartate 110, which acts as the Proton acceptor. Positions 133, 174, 176, and 177 each coordinate Mg(2+). The active-site Proton acceptor is threonine 179. AMP is bound by residues serine 242 and histidine 245. An N-linked (GlcNAc...) asparagine glycan is attached at asparagine 259. 2 residues coordinate AMP: glycine 268 and lysine 272. A Mg(2+)-binding site is contributed by aspartate 300.

It belongs to the inositol monophosphatase superfamily. Mg(2+) is required as a cofactor. In terms of processing, contains N-linked glycan resistant to endoglycosydase H.

Its subcellular location is the golgi apparatus. It is found in the trans-Golgi network membrane. The catalysed reaction is adenosine 3',5'-bisphosphate + H2O = AMP + phosphate. The protein operates within sulfur metabolism. With respect to regulation, strongly inhibited by lithium. Its function is as follows. Exhibits 3'-nucleotidase activity toward adenosine 3',5'-bisphosphate (PAP), namely hydrolyzes adenosine 3',5'-bisphosphate into adenosine 5'-monophosphate (AMP) and a phosphate. May play a role in the formation of skeletal elements derived through endochondral ossification, possibly by clearing adenosine 3',5'-bisphosphate produced by Golgi sulfotransferases during glycosaminoglycan sulfation. Has no activity toward 3'-phosphoadenosine 5'-phosphosulfate (PAPS) or inositol phosphate (IP) substrates including I(1)P, I(1,4)P2, I(1,3,4)P3, I(1,4,5)P3 and I(1,3,4,5)P4. The sequence is that of Golgi-resident adenosine 3',5'-bisphosphate 3'-phosphatase from Homo sapiens (Human).